The primary structure comprises 530 residues: Putative ABC transporter ATP-binding protein SSO2030 (530 aa).

ABC transporter domains lie at 6–243 and 282–516; these read IRDL…LGLE and ALYA…EPPL. Residues 38–45 and 314–321 each bind ATP; these read GRSGSGKS and GKNGSGKT.

The protein belongs to the ABC transporter superfamily.

It localises to the cell membrane. Its function is as follows. Probably part of an ABC transporter complex. Responsible for energy coupling to the transport system. This is Putative ABC transporter ATP-binding protein SSO2030 from Saccharolobus solfataricus (strain ATCC 35092 / DSM 1617 / JCM 11322 / P2) (Sulfolobus solfataricus).